Reading from the N-terminus, the 246-residue chain is MQWSDEGLVLGARRHGETSVVLELMTAGHGRHLGLVHGGRSRRMQPVLQPGNRVRAVWRARLDEGLGHFAVEPIESAAGRLMGSRLALYGLAHAAALLRLLPERDPHPSLYAAAQVLVAHLTDPAIAPALMVRFELAVLADLGFGLDLSACAATGSNAYLAYVSPKSGRAVSAAAGEPWRDRLLALPDFLVAREAGGTGATPTPRDVRQGFTLTGYFLDQHVWHPRGVAPPEARELFVALGTADAG.

It belongs to the RecO family.

Its function is as follows. Involved in DNA repair and RecF pathway recombination. The sequence is that of DNA repair protein RecO from Methylobacterium nodulans (strain LMG 21967 / CNCM I-2342 / ORS 2060).